The following is a 168-amino-acid chain: Calcium-binding protein 2 (168 aa).

EF-hand domains lie at 13–48 (GMEKDLESLFKKYDSDRNGKITYIEIVETLRKAGKK), 48–83 (KNPERIADLLFRDDTDKNGELTIEEAKLRIVRMNDE), 88–123 (VLNWDVEKFINDNDKDGDRKITRDEVLQRFTEQGAE), and 124–159 (DPELITDSIFRQMDLDRDGVITCDEIKEFNRKKKFS). 19 residues coordinate Ca(2+): D26, D28, N30, K32, E37, D61, D63, N65, E67, E72, D101, D103, D105, K107, E112, D137, D139, D141, and E148.

Not known; probably binds four calcium ions. In Dictyostelium discoideum (Social amoeba), this protein is Calcium-binding protein 2 (cbp2).